We begin with the raw amino-acid sequence, 594 residues long: Neopentalenolactone D synthase (594 aa).

FAD-binding positions include 64-65, 86-87, 94-95, 106-107, Tyr112, Val156, and Met494; these read IG, DK, TW, and DV.

It belongs to the FAD-binding monooxygenase family. The cofactor is FAD.

The catalysed reaction is 1-deoxy-11-oxopentalenate + NADPH + O2 + H(+) = neopentalenolactone D + NADP(+) + H2O. The protein operates within antibiotic biosynthesis; neopentalenolactone biosynthesis. Its function is as follows. Catalyzes the flavin-dependent Baeyer-Villiger oxidation of 1-deoxy-11-oxopentalenic acid to neopentalenolactone D in the biosynthesis of neopentalenolactone antibiotic. This Streptomyces avermitilis (strain ATCC 31267 / DSM 46492 / JCM 5070 / NBRC 14893 / NCIMB 12804 / NRRL 8165 / MA-4680) protein is Neopentalenolactone D synthase (ptlE).